Consider the following 122-residue polypeptide: Small ribosomal subunit protein uS12 (122 aa).

Asp89 bears the 3-methylthioaspartic acid mark.

This sequence belongs to the universal ribosomal protein uS12 family. In terms of assembly, part of the 30S ribosomal subunit. Contacts proteins S8 and S17. May interact with IF1 in the 30S initiation complex.

Its function is as follows. With S4 and S5 plays an important role in translational accuracy. In terms of biological role, interacts with and stabilizes bases of the 16S rRNA that are involved in tRNA selection in the A site and with the mRNA backbone. Located at the interface of the 30S and 50S subunits, it traverses the body of the 30S subunit contacting proteins on the other side and probably holding the rRNA structure together. The combined cluster of proteins S8, S12 and S17 appears to hold together the shoulder and platform of the 30S subunit. This chain is Small ribosomal subunit protein uS12, found in Corynebacterium glutamicum (strain R).